The chain runs to 210 residues: Outer-membrane lipoprotein LolB (210 aa).

An N-terminal signal peptide occupies residues 1 to 29; it reads MSLISNNEERSLRVRYCIAIALSALLISG. The N-palmitoyl cysteine moiety is linked to residue C30. Residue C30 is the site of S-diacylglycerol cysteine attachment.

The protein belongs to the LolB family. Monomer.

It localises to the cell outer membrane. Plays a critical role in the incorporation of lipoproteins in the outer membrane after they are released by the LolA protein. This is Outer-membrane lipoprotein LolB from Coxiella burnetii (strain CbuG_Q212) (Coxiella burnetii (strain Q212)).